The chain runs to 415 residues: T-cell-specific guanine nucleotide triphosphate-binding protein 1 (415 aa).

In terms of domain architecture, IRG-type G spans 55–237 (APLHIAVTGE…PKLETKLLQD (183 aa)). Residues Gly-66, Gly-68, Lys-69, and Ser-70 each contribute to the GDP site. Thr-89 carries the post-translational modification (Microbial infection) Phosphothreonine; by ROP17. 4 residues coordinate GDP: Gly-90, Lys-171, Asp-173, and Asn-219.

The protein belongs to the TRAFAC class dynamin-like GTPase superfamily. IRG family. As to quaternary structure, monomer, homodimer or homotetramer in the presence of GTP. Forms higher order homooligomers in GTP-dependent manner. In terms of assembly, (Microbial infection) Interacts with Toxoplasma gondii ROP18. Post-translationally, (Microbial infection) Phosphorylated by Toxoplasma gondii ROP17; the phosphorylation leads to disassembly of IRGB6 (TGTP1/TGTP2) polymers into monomers and dimers. Phosphorylated by Toxoplasma gondii ROP18. Expressed in thymus and lymph nodes, predominantly T-cells. Not expressed by immature CD4(+) CD8(+) thymocytes (at protein level). Expressed in IFNG-stimulated macrophages. Expressed at low levels in unstimulated astrocytes. Due to sequence similarity with Tgtp2, it is impossible to assign unambiguously experimental data published in the literature to Tgtp1 or Tgtp2 gene.

It localises to the cytoplasm. Its subcellular location is the endoplasmic reticulum. It is found in the golgi apparatus. The protein localises to the parasitophorous vacuole membrane. It catalyses the reaction GTP + H2O = GDP + phosphate + H(+). In terms of biological role, involved in innate cell-autonomous resistance to intracellular pathogens, such as Toxoplasma gondii. During avirulent type II T.gondii infection, recruited to the parasitophorous vacuole (PV) membrane, leading to PV vesiculation and rupture, and subsequent digestion of the parasite within the cytosol. Not recruited to virulent type I T.gondii PV membrane. May confer an antiviral state for vesicular stomatitis virus. The polypeptide is T-cell-specific guanine nucleotide triphosphate-binding protein 1 (Tgtp1) (Mus musculus (Mouse)).